The sequence spans 379 residues: Carbamoyl phosphate synthase small chain (379 aa).

The CPSase stretch occupies residues 1 to 183; sequence MTSQDRSEAV…EAYVVEPDGE (183 aa). L-glutamine-binding residues include Ser51, Gly235, and Gly237. The Glutamine amidotransferase type-1 domain occupies 185–379; that stretch reads LYTVVAYDMG…FVELIQANKK (195 aa). The active-site Nucleophile is the Cys263. L-glutamine contacts are provided by Phe264, Gln267, Asn305, Gly307, and Phe308. Residues His353 and Glu355 contribute to the active site.

This sequence belongs to the CarA family. In terms of assembly, composed of two chains; the small (or glutamine) chain promotes the hydrolysis of glutamine to ammonia, which is used by the large (or ammonia) chain to synthesize carbamoyl phosphate. Tetramer of heterodimers (alpha,beta)4.

It catalyses the reaction hydrogencarbonate + L-glutamine + 2 ATP + H2O = carbamoyl phosphate + L-glutamate + 2 ADP + phosphate + 2 H(+). It carries out the reaction L-glutamine + H2O = L-glutamate + NH4(+). It participates in amino-acid biosynthesis; L-arginine biosynthesis; carbamoyl phosphate from bicarbonate: step 1/1. It functions in the pathway pyrimidine metabolism; UMP biosynthesis via de novo pathway; (S)-dihydroorotate from bicarbonate: step 1/3. Functionally, small subunit of the glutamine-dependent carbamoyl phosphate synthetase (CPSase). CPSase catalyzes the formation of carbamoyl phosphate from the ammonia moiety of glutamine, carbonate, and phosphate donated by ATP, constituting the first step of 2 biosynthetic pathways, one leading to arginine and/or urea and the other to pyrimidine nucleotides. The small subunit (glutamine amidotransferase) binds and cleaves glutamine to supply the large subunit with the substrate ammonia. This Corynebacterium diphtheriae (strain ATCC 700971 / NCTC 13129 / Biotype gravis) protein is Carbamoyl phosphate synthase small chain.